The primary structure comprises 102 residues: NAD(P)H-quinone oxidoreductase subunit 4L (102 aa).

3 consecutive transmembrane segments (helical) span residues 4–24, 33–53, and 65–85; these read LQFFLVVAAILFCIGIYGLIV, MSIELMLNAVNLNFMAFSNFV, and VFVITVAAAEAAVGLAIVLGI.

It belongs to the complex I subunit 4L family. As to quaternary structure, NDH-1 can be composed of about 15 different subunits; different subcomplexes with different compositions have been identified which probably have different functions.

It localises to the cellular thylakoid membrane. The catalysed reaction is a plastoquinone + NADH + (n+1) H(+)(in) = a plastoquinol + NAD(+) + n H(+)(out). It carries out the reaction a plastoquinone + NADPH + (n+1) H(+)(in) = a plastoquinol + NADP(+) + n H(+)(out). Functionally, NDH-1 shuttles electrons from an unknown electron donor, via FMN and iron-sulfur (Fe-S) centers, to quinones in the respiratory and/or the photosynthetic chain. The immediate electron acceptor for the enzyme in this species is believed to be plastoquinone. Couples the redox reaction to proton translocation, and thus conserves the redox energy in a proton gradient. Cyanobacterial NDH-1 also plays a role in inorganic carbon-concentration. This is NAD(P)H-quinone oxidoreductase subunit 4L from Synechococcus sp. (strain JA-3-3Ab) (Cyanobacteria bacterium Yellowstone A-Prime).